Consider the following 944-residue polypeptide: Nonsense-mediated mRNA decay factor SMG8 (944 aa).

Disordered regions lie at residues 559–601 and 629–654; these read LNNG…SNCC and ASSEQLLNSEQNTTSSGTSSADTDNE. Acidic residues predominate over residues 568-589; it reads QDEDAEEDEAEEEEGQEQEQPT. Residues 629 to 640 show a composition bias toward polar residues; sequence ASSEQLLNSEQN. Low complexity predominate over residues 641-650; that stretch reads TTSSGTSSAD.

This sequence belongs to the SMG8 family.

In terms of biological role, involved in nonsense-mediated decay (NMD) of mRNAs containing premature stop codons. Probable component of kinase complex containing nonC and recruited to stalled ribosomes. The polypeptide is Nonsense-mediated mRNA decay factor SMG8 (Drosophila melanogaster (Fruit fly)).